We begin with the raw amino-acid sequence, 301 residues long: Oxaloacetate tautomerase YisK (301 aa).

Lysine 99 is an oxalate binding site. Positions 148, 150, and 179 each coordinate Mn(2+). 2 residues coordinate oxalate: lysine 196 and threonine 266.

It belongs to the FAH family. In terms of assembly, homodimer. Mg(2+) is required as a cofactor. It depends on Mn(2+) as a cofactor.

It is found in the cytoplasm. It carries out the reaction oxaloacetate = enol-oxaloacetate. The enzyme catalyses oxaloacetate + H(+) = pyruvate + CO2. Functionally, tautomerase that converts enol-oxaloacetate to the keto form of oxaloacetate. Also shows weak oxaloacetate decarboxylase (ODx), catalyzing the decarboxylation of oxaloacetate (OAA) to pyruvate and CO(2). This chain is Oxaloacetate tautomerase YisK, found in Bacillus subtilis (strain 168).